The primary structure comprises 99 residues: Small ribosomal subunit protein uS14c (99 aa).

It belongs to the universal ribosomal protein uS14 family. Part of the 30S ribosomal subunit.

Its subcellular location is the plastid. The protein resides in the chloroplast. Its function is as follows. Binds 16S rRNA, required for the assembly of 30S particles. In Welwitschia mirabilis (Tree tumbo), this protein is Small ribosomal subunit protein uS14c.